A 554-amino-acid polypeptide reads, in one-letter code: Hydroxylamine reductase (554 aa).

Residues Cys-3, Cys-6, Cys-18, and Cys-25 each contribute to the [2Fe-2S] cluster site. Residues His-252, Glu-276, Cys-320, Cys-408, Cys-436, Cys-461, Glu-495, and Lys-497 each contribute to the hybrid [4Fe-2O-2S] cluster site. Cys-408 carries the post-translational modification Cysteine persulfide.

The protein belongs to the HCP family. [2Fe-2S] cluster serves as cofactor. Requires hybrid [4Fe-2O-2S] cluster as cofactor.

Its subcellular location is the cytoplasm. The enzyme catalyses A + NH4(+) + H2O = hydroxylamine + AH2 + H(+). In terms of biological role, catalyzes the reduction of hydroxylamine to form NH(3) and H(2)O. In Shewanella amazonensis (strain ATCC BAA-1098 / SB2B), this protein is Hydroxylamine reductase.